The sequence spans 151 residues: Mitochondrial intermembrane space import and assembly protein 40 homolog (151 aa).

Positions 1-35 (MGQGLSQPAQAVEEPSPPAVEAAPSSSPSPAPAPS) are disordered. The segment covering 7–26 (QPAQAVEEPSPPAVEAAPSS) has biased composition (low complexity). 3 disulfides stabilise this stretch: cysteine 65–cysteine 67, cysteine 76–cysteine 109, and cysteine 86–cysteine 99. The region spanning 73–117 (NGPCGSQFVDAFSCFLKSTEEEKGSDCVKPFIALQDCIKINPEAF) is the CHCH domain. Short sequence motifs (cx9C motif) lie at residues 76–86 (CGSQFVDAFSC) and 99–109 (CVKPFIALQDC). The tract at residues 123–151 (EEEENDEEAEKSNLKVRAPAWSRESKPKL) is disordered.

Its subcellular location is the mitochondrion intermembrane space. It is found in the peroxisome matrix. Its function is as follows. Required for the import and folding of small cysteine-containing proteins in the mitochondrial intermembrane space. In Oryza sativa subsp. japonica (Rice), this protein is Mitochondrial intermembrane space import and assembly protein 40 homolog.